The chain runs to 317 residues: Ribosomal protein L11 methyltransferase (317 aa).

4 residues coordinate S-adenosyl-L-methionine: T158, G179, D201, and N244.

It belongs to the methyltransferase superfamily. PrmA family.

The protein resides in the cytoplasm. The enzyme catalyses L-lysyl-[protein] + 3 S-adenosyl-L-methionine = N(6),N(6),N(6)-trimethyl-L-lysyl-[protein] + 3 S-adenosyl-L-homocysteine + 3 H(+). In terms of biological role, methylates ribosomal protein L11. The chain is Ribosomal protein L11 methyltransferase from Streptococcus thermophilus (strain CNRZ 1066).